Reading from the N-terminus, the 225-residue chain is Protein YIP4 (225 aa).

Serine 27 and serine 28 each carry phosphoserine. The next 5 helical transmembrane spans lie at 91–111 (WDLW…ALST), 118–138 (SVFT…SLNI), 154–176 (LGYS…LIFI), 180–199 (VIVA…LQNS), and 205–225 (KLLA…IIFL).

The protein belongs to the YIP1 family. As to quaternary structure, interacts with the YIP1 family members yip1 and yip5, and with several Rab GTPases.

The protein localises to the membrane. In terms of biological role, may be involved in proper membrane localization of Rab GTPases. This Schizosaccharomyces pombe (strain 972 / ATCC 24843) (Fission yeast) protein is Protein YIP4.